Reading from the N-terminus, the 437-residue chain is Serine carboxypeptidase-like 10 (437 aa).

Residues 1 to 21 form the signal peptide; that stretch reads MGSTLKHLLLLLLVLIRHVDS. Intrachain disulfides connect Cys80–Cys327, Cys243–Cys257, and Cys281–Cys293. A glycan (N-linked (GlcNAc...) asparagine) is linked at Asn101. Ser175 is a catalytic residue. N-linked (GlcNAc...) asparagine glycosylation is present at Asn328. Asp362 is a catalytic residue. Asn378 carries N-linked (GlcNAc...) asparagine glycosylation. His415 is a catalytic residue. Asn422 carries N-linked (GlcNAc...) asparagine glycosylation.

It belongs to the peptidase S10 family. As to expression, expressed in senescent leaves.

It localises to the secreted. Functionally, involved in the biosynthesis of sinapoylated anthocyanins. The polypeptide is Serine carboxypeptidase-like 10 (SCPL10) (Arabidopsis thaliana (Mouse-ear cress)).